A 156-amino-acid chain; its full sequence is Small ribosomal subunit protein uS7c (156 aa).

The protein belongs to the universal ribosomal protein uS7 family. In terms of assembly, part of the 30S ribosomal subunit.

It localises to the plastid. The protein localises to the chloroplast. One of the primary rRNA binding proteins, it binds directly to 16S rRNA where it nucleates assembly of the head domain of the 30S subunit. This is Small ribosomal subunit protein uS7c (rps7) from Cyanidium caldarium (Red alga).